The primary structure comprises 404 residues: Coenzyme F420H(2) oxidase (404 aa).

Fe cation is bound by residues H84, E86, D88, H89, H152, D170, and H233. One can recognise a Flavodoxin-like domain in the interval V259–A399. Residues T265–T270, A317–D320, and S351–G356 contribute to the FMN site.

It in the N-terminal section; belongs to the zinc metallo-hydrolase group 3 family. Requires FMN as cofactor. The cofactor is Fe cation.

The catalysed reaction is 2 reduced coenzyme F420-(gamma-L-Glu)(n) + O2 = 2 oxidized coenzyme F420-(gamma-L-Glu)(n) + 2 H2O + 2 H(+). In terms of biological role, catalyzes the oxidation of F420H(2) with O(2). May be involved in O(2) detoxification, reducing the intracellular O(2) concentration to a level allowing growth at the expense of methane formation. This is Coenzyme F420H(2) oxidase from Methanothermobacter thermautotrophicus (strain ATCC 29096 / DSM 1053 / JCM 10044 / NBRC 100330 / Delta H) (Methanobacterium thermoautotrophicum).